The primary structure comprises 174 residues: NADH-ubiquinone oxidoreductase chain 6 (174 aa).

5 helical membrane passes run 1-21 (MTYV…GFSS), 24-44 (SPIY…AIIL), 47-67 (GGGY…MVVF), 86-106 (VEVL…VLWV), and 151-171 (WLVV…IEIA).

This sequence belongs to the complex I subunit 6 family. Core subunit of respiratory chain NADH dehydrogenase (Complex I) which is composed of 45 different subunits.

It localises to the mitochondrion inner membrane. It catalyses the reaction a ubiquinone + NADH + 5 H(+)(in) = a ubiquinol + NAD(+) + 4 H(+)(out). Core subunit of the mitochondrial membrane respiratory chain NADH dehydrogenase (Complex I) which catalyzes electron transfer from NADH through the respiratory chain, using ubiquinone as an electron acceptor. Essential for the catalytic activity and assembly of complex I. This Gorilla gorilla gorilla (Western lowland gorilla) protein is NADH-ubiquinone oxidoreductase chain 6 (MT-ND6).